The primary structure comprises 490 residues: Acetyl-coenzyme A carboxylase carboxyl transferase subunit beta, chloroplastic (490 aa).

Residues 184–203 (LNSSENEGSSRRTRTKGSDL) are disordered. The region spanning 221–490 (LWVQCENCYG…PLNQKSSKIK (270 aa)) is the CoA carboxyltransferase N-terminal domain. Zn(2+) is bound by residues Cys-225, Cys-228, Cys-244, and Cys-247. The C4-type zinc finger occupies 225 to 247 (CENCYGLNYKKFLKSKMNICEQC).

It belongs to the AccD/PCCB family. As to quaternary structure, acetyl-CoA carboxylase is a heterohexamer composed of biotin carboxyl carrier protein, biotin carboxylase and 2 subunits each of ACCase subunit alpha and ACCase plastid-coded subunit beta (accD). Zn(2+) is required as a cofactor. As to expression, RNA expressed in leaf, root, stem, and tuber; the least expression occurs in stems. RNA persists even in senescent leaves.

Its subcellular location is the plastid. It localises to the chloroplast stroma. The catalysed reaction is N(6)-carboxybiotinyl-L-lysyl-[protein] + acetyl-CoA = N(6)-biotinyl-L-lysyl-[protein] + malonyl-CoA. It participates in lipid metabolism; malonyl-CoA biosynthesis; malonyl-CoA from acetyl-CoA: step 1/1. In terms of biological role, component of the acetyl coenzyme A carboxylase (ACC) complex. Biotin carboxylase (BC) catalyzes the carboxylation of biotin on its carrier protein (BCCP) and then the CO(2) group is transferred by the transcarboxylase to acetyl-CoA to form malonyl-CoA. The sequence is that of Acetyl-coenzyme A carboxylase carboxyl transferase subunit beta, chloroplastic from Solanum tuberosum (Potato).